The following is a 753-amino-acid chain: Transcription factor SOX-30 (753 aa).

2 disordered regions span residues methionine 1 to alanine 45 and glutamine 140 to arginine 161. Positions glutamate 7 to leucine 22 are enriched in pro residues. The segment at residues valine 337–valine 405 is a DNA-binding region (HMG box). Disordered regions lie at residues alanine 514–leucine 540 and proline 726–leucine 753. Composition is skewed to polar residues over residues threonine 531–leucine 540 and proline 726–threonine 739.

As to quaternary structure, interacts with CTNNB1, competitively inhibiting CTNNB1-TCF7L2/TCF4 interaction.

The protein localises to the nucleus. It is found in the cytoplasm. Functionally, acts both as a transcriptional activator and a repressor. Binds to the DNA sequence 5'-ACAAT-3' and shows a preference for guanine residues surrounding this core motif. Binds to its own promoter and activates its own transcription. Required to activate the expression of postmeiotic genes involved in spermiogenesis. Binds to the promoter region of CTNNB1 and represses its transcription which leads to inhibition of Wnt signaling. Also inhibits Wnt signaling by binding to the CTNNB1 protein, preventing interaction of CTNNB1 with TCF7L2/TCF4. The chain is Transcription factor SOX-30 (SOX30) from Macaca fascicularis (Crab-eating macaque).